We begin with the raw amino-acid sequence, 349 residues long: MRPIKLMGHERSLTQVKFNREGDLIFSVAKDSTASIWYSSNGERLGTLEGHIGTIWSIDVDADTILCATGSADLTIKLWKIETGECVQSWEMPTPVRRVAFSPDNKRLLAVTDQVMGQTGTISVFDINYEGDYTKQQSKPSLIIETRSDAKKVTVAGWSANGDFIIAGHEDGYVSKYNSSTGEFIETAQVHGIHNEEKIASITDIQFAPEDKSYIVTASKDKCSCLVDVDTLELMKVYKADAPMNTAAITPIKDFVILGGGQEARNVTTTAESQGKFEARFYHKIFIDEIGRVKGHFGPLNSIAVHPDGTGYASGGEDGFIRLHYFDKSYFDFEFDTERAERAMASSAA.

WD repeat units lie at residues 8–49 (GHER…GTLE), 51–91 (HIGT…QSWE), 93–135 (PTPV…DYTK), 148–187 (SDAK…FIET), 197–239 (EKIA…KVYK), and 295–336 (GHFG…FEFD).

The protein belongs to the eIF-3 subunit I family. Component of the eukaryotic translation initiation factor 3 (eIF-3) complex.

It localises to the cytoplasm. In terms of biological role, component of the eukaryotic translation initiation factor 3 (eIF-3) complex, which is involved in protein synthesis of a specialized repertoire of mRNAs and, together with other initiation factors, stimulates binding of mRNA and methionyl-tRNAi to the 40S ribosome. The eIF-3 complex specifically targets and initiates translation of a subset of mRNAs involved in cell proliferation. This chain is Eukaryotic translation initiation factor 3 subunit I, found in Debaryomyces hansenii (strain ATCC 36239 / CBS 767 / BCRC 21394 / JCM 1990 / NBRC 0083 / IGC 2968) (Yeast).